We begin with the raw amino-acid sequence, 379 residues long: Carbamoyl phosphate synthase small chain (379 aa).

A CPSase region spans residues 1 to 188; that stretch reads MSTPAILALA…ELGKGFTQPE (188 aa). Residues S47, G240, and G242 each contribute to the L-glutamine site. The region spanning 192 to 379 is the Glutamine amidotransferase type-1 domain; the sequence is HVVAYDYGVK…FIELIEAAKK (188 aa). The Nucleophile role is filled by C269. L-glutamine-binding residues include L270, Q273, N311, G313, and F314. Residues H353 and E355 contribute to the active site.

Belongs to the CarA family. In terms of assembly, composed of two chains; the small (or glutamine) chain promotes the hydrolysis of glutamine to ammonia, which is used by the large (or ammonia) chain to synthesize carbamoyl phosphate. Tetramer of heterodimers (alpha,beta)4.

The catalysed reaction is hydrogencarbonate + L-glutamine + 2 ATP + H2O = carbamoyl phosphate + L-glutamate + 2 ADP + phosphate + 2 H(+). It catalyses the reaction L-glutamine + H2O = L-glutamate + NH4(+). The protein operates within amino-acid biosynthesis; L-arginine biosynthesis; carbamoyl phosphate from bicarbonate: step 1/1. Its pathway is pyrimidine metabolism; UMP biosynthesis via de novo pathway; (S)-dihydroorotate from bicarbonate: step 1/3. In terms of biological role, small subunit of the glutamine-dependent carbamoyl phosphate synthetase (CPSase). CPSase catalyzes the formation of carbamoyl phosphate from the ammonia moiety of glutamine, carbonate, and phosphate donated by ATP, constituting the first step of 2 biosynthetic pathways, one leading to arginine and/or urea and the other to pyrimidine nucleotides. The small subunit (glutamine amidotransferase) binds and cleaves glutamine to supply the large subunit with the substrate ammonia. In Acinetobacter baylyi (strain ATCC 33305 / BD413 / ADP1), this protein is Carbamoyl phosphate synthase small chain.